The chain runs to 374 residues: 5-hydroxytryptamine receptor 1D (374 aa).

Asn5, Asn17, and Asn21 each carry an N-linked (GlcNAc...) asparagine glycan. 3 consecutive transmembrane segments (helical) span residues 36-61, 73-94, and 107-131; these read ISLV…TTIL, LIGS…ISIA, and LCDI…VIAL. Cys108 and Cys185 are oxidised to a cystine. The serotonin site is built by Asp115 and Cys119. The DRY motif; important for ligand-induced conformation changes motif lies at 132-134; the sequence is DRY. Helical transmembrane passes span 152–173, 192–215, 298–323, and 333–356; these read AAAM…PLFW, ISYT…ILYG, KTLG…VLPI, and ALFD…YTVF. Ser318 contributes to the serotonin binding site. Positions 349–353 match the NPxxY motif; important for ligand-induced conformation changes and signaling motif; it reads NPVIY.

The protein belongs to the G-protein coupled receptor 1 family. As to quaternary structure, homodimer. Heterodimer with HTR1B. Detected in dorsal raphe.

The protein resides in the cell membrane. G-protein coupled receptor for 5-hydroxytryptamine (serotonin). Also functions as a receptor for ergot alkaloid derivatives, various anxiolytic and antidepressant drugs and other psychoactive substances. Ligand binding causes a conformation change that triggers signaling via guanine nucleotide-binding proteins (G proteins) and modulates the activity of downstream effectors, such as adenylate cyclase. HTR1D is coupled to G(i)/G(o) G alpha proteins and mediates inhibitory neurotransmission by inhibiting adenylate cyclase activity. Regulates the release of 5-hydroxytryptamine in the brain, and thereby affects neural activity. May also play a role in regulating the release of other neurotransmitters. May play a role in vasoconstriction. In Rattus norvegicus (Rat), this protein is 5-hydroxytryptamine receptor 1D (Htr1d).